The primary structure comprises 131 residues: Small ribosomal subunit protein uS8 (131 aa).

The protein belongs to the universal ribosomal protein uS8 family. As to quaternary structure, part of the 30S ribosomal subunit. Contacts proteins S5 and S12.

Functionally, one of the primary rRNA binding proteins, it binds directly to 16S rRNA central domain where it helps coordinate assembly of the platform of the 30S subunit. This chain is Small ribosomal subunit protein uS8, found in Malacoplasma penetrans (strain HF-2) (Mycoplasma penetrans).